A 440-amino-acid chain; its full sequence is Glutamyl-tRNA reductase (440 aa).

Residues 47 to 50 (TCNR), Ser-110, 115 to 117 (ERE), and Gln-121 contribute to the substrate site. Residue Cys-48 is the Nucleophile of the active site. 192–197 (GTGAYA) serves as a coordination point for NADP(+).

This sequence belongs to the glutamyl-tRNA reductase family. Homodimer.

It catalyses the reaction (S)-4-amino-5-oxopentanoate + tRNA(Glu) + NADP(+) = L-glutamyl-tRNA(Glu) + NADPH + H(+). Its pathway is porphyrin-containing compound metabolism; protoporphyrin-IX biosynthesis; 5-aminolevulinate from L-glutamyl-tRNA(Glu): step 1/2. Catalyzes the NADPH-dependent reduction of glutamyl-tRNA(Glu) to glutamate 1-semialdehyde (GSA). This Paenarthrobacter aurescens (strain TC1) protein is Glutamyl-tRNA reductase.